Here is a 918-residue protein sequence, read N- to C-terminus: Chaperone protein ClpC1, chloroplastic (918 aa).

Positions 88 to 230 constitute a Clp R domain; it reads FERFTEKAIK…RTQVIRMVGE (143 aa). 2 repeat regions span residues 91-156 and 166-230; these read FTEK…IGRG and FTPR…MVGE. The interval 251–498 is i; sequence LEEYGTNLTK…RVRLRHAQLP (248 aa). 296–303 provides a ligand contact to ATP; sequence GEPGVGKT. One can recognise a UVR domain in the interval 505–540; sequence DKELRQVTKDKNEAVRGQDFEKAGELRDREMELKAQ. The interval 565–756 is II; sequence VTEADIQHIV…LLIMTSNVGS (192 aa). 639 to 646 lines the ATP pocket; it reads GPTGVGKS.

The protein belongs to the ClpA/ClpB family. ClpC subfamily. Widely expressed.

It localises to the plastid. The protein resides in the chloroplast. Molecular chaperone that may interact with a ClpP-like protease involved in degradation of denatured proteins in the chloroplast. The polypeptide is Chaperone protein ClpC1, chloroplastic (CLPC1) (Oryza sativa subsp. japonica (Rice)).